The chain runs to 382 residues: Prophage ps2 probable integrase (382 aa).

The Core-binding (CB) domain maps to 63 to 142 (AKFTDIAEEW…TLNLIFDYAV (80 aa)). The region spanning 170-376 (IQNKYLEQNE…TENMKSSIID (207 aa)) is the Tyr recombinase domain. Residues R209, K242, H326, R329, and H352 contribute to the active site. Catalysis depends on Y363, which acts as the O-(3'-phospho-DNA)-tyrosine intermediate.

Belongs to the 'phage' integrase family.

This chain is Prophage ps2 probable integrase (ps201), found in Lactococcus lactis subsp. lactis (strain IL1403) (Streptococcus lactis).